A 169-amino-acid polypeptide reads, in one-letter code: Crossover junction endodeoxyribonuclease RuvC (169 aa).

Active-site residues include aspartate 12, glutamate 72, and aspartate 144. The Mg(2+) site is built by aspartate 12, glutamate 72, and aspartate 144.

This sequence belongs to the RuvC family. Homodimer which binds Holliday junction (HJ) DNA. The HJ becomes 2-fold symmetrical on binding to RuvC with unstacked arms; it has a different conformation from HJ DNA in complex with RuvA. In the full resolvosome a probable DNA-RuvA(4)-RuvB(12)-RuvC(2) complex forms which resolves the HJ. Requires Mg(2+) as cofactor.

It localises to the cytoplasm. It carries out the reaction Endonucleolytic cleavage at a junction such as a reciprocal single-stranded crossover between two homologous DNA duplexes (Holliday junction).. In terms of biological role, the RuvA-RuvB-RuvC complex processes Holliday junction (HJ) DNA during genetic recombination and DNA repair. Endonuclease that resolves HJ intermediates. Cleaves cruciform DNA by making single-stranded nicks across the HJ at symmetrical positions within the homologous arms, yielding a 5'-phosphate and a 3'-hydroxyl group; requires a central core of homology in the junction. The consensus cleavage sequence is 5'-(A/T)TT(C/G)-3'. Cleavage occurs on the 3'-side of the TT dinucleotide at the point of strand exchange. HJ branch migration catalyzed by RuvA-RuvB allows RuvC to scan DNA until it finds its consensus sequence, where it cleaves and resolves the cruciform DNA. This chain is Crossover junction endodeoxyribonuclease RuvC, found in Azorhizobium caulinodans (strain ATCC 43989 / DSM 5975 / JCM 20966 / LMG 6465 / NBRC 14845 / NCIMB 13405 / ORS 571).